The chain runs to 362 residues: Probable S-adenosylmethionine-dependent methyltransferase At5g37990 (362 aa).

6 residues coordinate S-adenosyl-L-homocysteine: Tyr-19, Cys-66, Asn-71, Asp-107, Ser-136, and Phe-137. Residues Asn-175, Glu-261, and Phe-263 each contribute to the Mg(2+) site.

This sequence belongs to the methyltransferase superfamily. Type-7 methyltransferase family. As to quaternary structure, homodimer. Requires Mg(2+) as cofactor.

The polypeptide is Probable S-adenosylmethionine-dependent methyltransferase At5g37990 (Arabidopsis thaliana (Mouse-ear cress)).